A 291-amino-acid polypeptide reads, in one-letter code: MFIIELIKGIILGVVEGLTEFAPVSSTGHMILVDDMWLKSSEFLGSQSAFTFKIVIQLGSVFAAAWVFRERFLEILHIGKHKHVEGDNDQQRRSKPRRLNLLHVLVGMVPAGILGLLFDDFIEEHLFSVPTVMIGLFVGAIYMIIADKYSAKVKNPQTVDQISYFQAFVIGISQAVAMWPGFSRSGSTISTGVLMKLNHKAASDFTFIMAVPIMLAASGLSLLKHYQDIQIADIPFYILGFLAAFTVGLIAIKTFLHLINKIKLIPFAIYRIVLVIFIAILYFGFGIGKGI.

8 helical membrane passes run 1-21, 48-68, 102-122, 126-146, 162-182, 203-223, 231-251, and 267-287; these read MFII…LTEF, SAFT…AWVF, LHVL…DDFI, LFSV…MIIA, ISYF…WPGF, SDFT…LSLL, IADI…GLIA, and FAIY…GFGI.

The protein belongs to the UppP family.

The protein resides in the cell membrane. The catalysed reaction is di-trans,octa-cis-undecaprenyl diphosphate + H2O = di-trans,octa-cis-undecaprenyl phosphate + phosphate + H(+). Its function is as follows. Catalyzes the dephosphorylation of undecaprenyl diphosphate (UPP). Confers resistance to bacitracin. In Staphylococcus aureus (strain USA300), this protein is Undecaprenyl-diphosphatase.